We begin with the raw amino-acid sequence, 370 residues long: GDSL esterase/lipase At1g09390 (370 aa).

An N-terminal signal peptide occupies residues 1 to 27 (MATLSLHSHSFLLVLLPFILILRQNLA). The active-site Nucleophile is S44. Residues N90 and N315 are each glycosylated (N-linked (GlcNAc...) asparagine). Residues D336 and H339 contribute to the active site.

It belongs to the 'GDSL' lipolytic enzyme family.

The protein resides in the secreted. This chain is GDSL esterase/lipase At1g09390, found in Arabidopsis thaliana (Mouse-ear cress).